A 767-amino-acid chain; its full sequence is Dipeptidyl peptidase 4 (767 aa).

The Cytoplasmic portion of the chain corresponds to Met-1 to Lys-6. Residues Val-7 to Leu-28 traverse the membrane as a helical; Signal-anchor for type II membrane protein segment. Over Asn-29 to Arg-767 the chain is Extracellular. 6 N-linked (GlcNAc...) asparagine glycosylation sites follow: Asn-83, Asn-90, Asn-148, Asn-217, Asn-227, and Asn-319. 4 disulfide bridges follow: Cys-326/Cys-337, Cys-383/Cys-395, Cys-445/Cys-448, and Cys-455/Cys-473. Asn-521 carries N-linked (GlcNAc...) asparagine glycosylation. Catalysis depends on Ser-631, which acts as the Charge relay system. Cysteines 650 and 763 form a disulfide. Asn-686 carries N-linked (GlcNAc...) asparagine glycosylation. Residues Asp-709 and His-741 each act as charge relay system in the active site.

The protein belongs to the peptidase S9B family. DPPIV subfamily. In terms of assembly, monomer. Homodimer. Heterodimer with Seprase (FAP). Requires homodimerization for optimal dipeptidyl peptidase activity and T-cell costimulation. Found in a membrane raft complex, at least composed of BCL10, CARD11, DPP4 and IKBKB. Associates with collagen. Interacts with PTPRC; the interaction is enhanced in an interleukin-12-dependent manner in activated lymphocytes. Interacts (via extracellular domain) with ADA; does not inhibit its dipeptidyl peptidase activity. Interacts with CAV1 (via the N-terminus); the interaction is direct. Interacts (via cytoplasmic tail) with CARD11 (via PDZ domain); its homodimerization is necessary for interaction with CARD11. Interacts with IGF2R; the interaction is direct. Interacts with GPC3. Post-translationally, the soluble form (Dipeptidyl peptidase 4 soluble form also named SDPP) derives from the membrane form (Dipeptidyl peptidase 4 membrane form also named MDPP) by proteolytic processing. N- and O-Glycosylated. In terms of processing, phosphorylated. Mannose 6-phosphate residues in the carbohydrate moiety are necessary for interaction with IGF2R in activated T-cells. Mannose 6-phosphorylation is induced during T-cell activation. Expressed in bile ducts and other epithelial brush borders (small intestine, kidney, colon, pancreatic duct); acinar structures in salivary glands; endothelial structures and T cell areas in thymus, spleen and lymph node.

The protein resides in the secreted. It is found in the cell membrane. The protein localises to the apical cell membrane. Its subcellular location is the cell projection. It localises to the invadopodium membrane. The protein resides in the lamellipodium membrane. It is found in the cell junction. The protein localises to the membrane raft. It carries out the reaction Release of an N-terminal dipeptide, Xaa-Yaa-|-Zaa-, from a polypeptide, preferentially when Yaa is Pro, provided Zaa is neither Pro nor hydroxyproline.. Inhibited by GPC3 and diprotin A. Cell surface glycoprotein receptor involved in the costimulatory signal essential for T-cell receptor (TCR)-mediated T-cell activation. Acts as a positive regulator of T-cell coactivation, by binding at least ADA, CAV1, IGF2R, and PTPRC. Its binding to CAV1 and CARD11 induces T-cell proliferation and NF-kappa-B activation in a T-cell receptor/CD3-dependent manner. Its interaction with ADA also regulates lymphocyte-epithelial cell adhesion. In association with FAP is involved in the pericellular proteolysis of the extracellular matrix (ECM), the migration and invasion of endothelial cells into the ECM. May be involved in the promotion of lymphatic endothelial cells adhesion, migration and tube formation. When overexpressed, enhanced cell proliferation, a process inhibited by GPC3. Also acts as a serine exopeptidase with a dipeptidyl peptidase activity that regulates various physiological processes by cleaving peptides in the circulation, including many chemokines, mitogenic growth factors, neuropeptides and peptide hormones. Removes N-terminal dipeptides sequentially from polypeptides having unsubstituted N-termini provided that the penultimate residue is proline. The chain is Dipeptidyl peptidase 4 (Dpp4) from Rattus norvegicus (Rat).